Consider the following 366-residue polypeptide: MTPEHLPTEQYEAQLAEKVVRLQSMMAPFSDLVPEVFRSPVSHYRMRAEFRIWHDGDDLYHIIFDQQTKSRIRVDSFPAASELINQLMTAMIAGVRNNPVLRHKLFQIDYLTTLSNQAVVSLLYHKKLDDEWRQEAEALRDALRAQNLNVHLIGRATKTKIALDQDYIDERLPVAGKEMIYRQVENSFTQPNAAMNIQMLEWALDVTKGSKGDLLELYCGNGNFSLALAHNFDRVLATEIAKPSVAAAQYNIAANHIDNVQIIRMAAEEFTQAMNGVREFNRLQGIDLKSYQCETIFVDPPRSGLDSETEKMVQAYPRILYISCNPETLCKNLETLSQTHKVERLALFDQFPYTHHMECGVLLTAK.

Residues Gln-190, Tyr-218, Asn-223, Glu-239, and Asp-299 each contribute to the S-adenosyl-L-methionine site. The Nucleophile role is filled by Cys-324. Glu-358 acts as the Proton acceptor in catalysis.

This sequence belongs to the class I-like SAM-binding methyltransferase superfamily. RNA M5U methyltransferase family. TrmA subfamily.

The enzyme catalyses uridine(54) in tRNA + S-adenosyl-L-methionine = 5-methyluridine(54) in tRNA + S-adenosyl-L-homocysteine + H(+). It catalyses the reaction uridine(341) in tmRNA + S-adenosyl-L-methionine = 5-methyluridine(341) in tmRNA + S-adenosyl-L-homocysteine + H(+). In terms of biological role, dual-specificity methyltransferase that catalyzes the formation of 5-methyluridine at position 54 (m5U54) in all tRNAs, and that of position 341 (m5U341) in tmRNA (transfer-mRNA). The chain is tRNA/tmRNA (uracil-C(5))-methyltransferase from Shigella dysenteriae serotype 1 (strain Sd197).